The sequence spans 224 residues: PKHD-type hydroxylase Tgr7_2199 (224 aa).

The Fe2OG dioxygenase domain occupies 78–176; the sequence is KLSGAFFARY…RLVAVAWAES (99 aa). Fe cation-binding residues include His-96, Asp-98, and His-157. Arg-167 is a binding site for 2-oxoglutarate.

The cofactor is Fe(2+). L-ascorbate is required as a cofactor.

In Thioalkalivibrio sulfidiphilus (strain HL-EbGR7), this protein is PKHD-type hydroxylase Tgr7_2199.